The primary structure comprises 232 residues: Myb-related protein 308 (232 aa).

HTH myb-type domains are found at residues 9-61 (KAHT…INYL) and 62-116 (RPDL…RRKL). DNA-binding regions (H-T-H motif) lie at residues 37–61 (WRSL…INYL) and 89–112 (WSLI…NTHI).

Expressed in roots, stems, leaves, seed pods and flowers.

The protein localises to the nucleus. Functionally, transcription factor. The polypeptide is Myb-related protein 308 (Antirrhinum majus (Garden snapdragon)).